We begin with the raw amino-acid sequence, 220 residues long: Fructose-6-phosphate aldolase (220 aa).

The Schiff-base intermediate with substrate role is filled by Lys-85.

The protein belongs to the transaldolase family. Type 3A subfamily. In terms of assembly, homodecamer.

Its subcellular location is the cytoplasm. It catalyses the reaction beta-D-fructose 6-phosphate = dihydroxyacetone + D-glyceraldehyde 3-phosphate. Functionally, catalyzes the reversible formation of fructose 6-phosphate from dihydroxyacetone and D-glyceraldehyde 3-phosphate via an aldolization reaction. This is Fructose-6-phosphate aldolase from Salmonella schwarzengrund (strain CVM19633).